The primary structure comprises 85 residues: MVPRDLVATLLCAMCIVQATMPSLDNYLYIIKRIKLCNDDYKNYCLNNGTCFTVALNNVSLNPFCACHINYVGSRCQFINLITIK.

Residues 1–19 (MVPRDLVATLLCAMCIVQA) form the signal peptide. Residues 33 to 77 (RIKLCNDDYKNYCLNNGTCFTVALNNVSLNPFCACHINYVGSRCQ) form the EGF-like domain. Intrachain disulfides connect Cys-37/Cys-51, Cys-45/Cys-65, and Cys-67/Cys-76. Residues Asn-48 and Asn-58 are each glycosylated (N-linked (GlcNAc...) asparagine; by host).

It localises to the secreted. Functionally, stimulates the growth of some tissues. The protein is Growth factor (MGF) of Oryctolagus cuniculus (Rabbit).